Here is a 378-residue protein sequence, read N- to C-terminus: Ribosomal RNA large subunit methyltransferase G (378 aa).

This sequence belongs to the methyltransferase superfamily. RlmG family.

The protein resides in the cytoplasm. It carries out the reaction guanosine(1835) in 23S rRNA + S-adenosyl-L-methionine = N(2)-methylguanosine(1835) in 23S rRNA + S-adenosyl-L-homocysteine + H(+). In terms of biological role, specifically methylates the guanine in position 1835 (m2G1835) of 23S rRNA. The protein is Ribosomal RNA large subunit methyltransferase G of Shewanella baltica (strain OS155 / ATCC BAA-1091).